The primary structure comprises 215 residues: Thiamine-phosphate synthase (215 aa).

4-amino-2-methyl-5-(diphosphooxymethyl)pyrimidine is bound by residues Gln43 to Lys47 and Asn78. Mg(2+) contacts are provided by Asp79 and Asp98. Residue Ser117 participates in 4-amino-2-methyl-5-(diphosphooxymethyl)pyrimidine binding. Residue Thr143 to Ser145 coordinates 2-[(2R,5Z)-2-carboxy-4-methylthiazol-5(2H)-ylidene]ethyl phosphate. Position 146 (Lys146) interacts with 4-amino-2-methyl-5-(diphosphooxymethyl)pyrimidine. 2-[(2R,5Z)-2-carboxy-4-methylthiazol-5(2H)-ylidene]ethyl phosphate contacts are provided by residues Gly174 and Ile194 to Ser195.

This sequence belongs to the thiamine-phosphate synthase family. The cofactor is Mg(2+).

It catalyses the reaction 2-[(2R,5Z)-2-carboxy-4-methylthiazol-5(2H)-ylidene]ethyl phosphate + 4-amino-2-methyl-5-(diphosphooxymethyl)pyrimidine + 2 H(+) = thiamine phosphate + CO2 + diphosphate. The catalysed reaction is 2-(2-carboxy-4-methylthiazol-5-yl)ethyl phosphate + 4-amino-2-methyl-5-(diphosphooxymethyl)pyrimidine + 2 H(+) = thiamine phosphate + CO2 + diphosphate. The enzyme catalyses 4-methyl-5-(2-phosphooxyethyl)-thiazole + 4-amino-2-methyl-5-(diphosphooxymethyl)pyrimidine + H(+) = thiamine phosphate + diphosphate. It participates in cofactor biosynthesis; thiamine diphosphate biosynthesis; thiamine phosphate from 4-amino-2-methyl-5-diphosphomethylpyrimidine and 4-methyl-5-(2-phosphoethyl)-thiazole: step 1/1. Condenses 4-methyl-5-(beta-hydroxyethyl)thiazole monophosphate (THZ-P) and 2-methyl-4-amino-5-hydroxymethyl pyrimidine pyrophosphate (HMP-PP) to form thiamine monophosphate (TMP). The chain is Thiamine-phosphate synthase from Lactococcus lactis subsp. lactis (strain IL1403) (Streptococcus lactis).